We begin with the raw amino-acid sequence, 179 residues long: Large ribosomal subunit protein uL10 (179 aa).

This sequence belongs to the universal ribosomal protein uL10 family. Part of the ribosomal stalk of the 50S ribosomal subunit. The N-terminus interacts with L11 and the large rRNA to form the base of the stalk. The C-terminus forms an elongated spine to which L12 dimers bind in a sequential fashion forming a multimeric L10(L12)X complex.

Functionally, forms part of the ribosomal stalk, playing a central role in the interaction of the ribosome with GTP-bound translation factors. The polypeptide is Large ribosomal subunit protein uL10 (Symbiobacterium thermophilum (strain DSM 24528 / JCM 14929 / IAM 14863 / T)).